The chain runs to 901 residues: Vacuolar import and degradation protein 22 (901 aa).

The segment covering 1 to 10 (MRAMDTQVQS) has biased composition (polar residues). The interval 1 to 54 (MRAMDTQVQSAERGLVLPPMNSTVSSATAATTATNTDTDTDGDRDEERESLAED) is disordered. An N-linked (GlcNAc...) asparagine glycan is attached at N21. Low complexity predominate over residues 27–37 (ATAATTATNTD). The BED-type zinc-finger motif lies at 66–122 (RDRSRYLGHFLGVDKMLEAVKCKYCGVIIRRQGNSISMAEASQTHLWSTHKIDPNAN). Zn(2+) is bound by residues C87, C90, H110, and H115. Residues N242 and N291 are each glycosylated (N-linked (GlcNAc...) asparagine). Residues 381 to 401 (YYHNCIISIINSAILPLFGTP) form a helical membrane-spanning segment. 9 N-linked (GlcNAc...) asparagine glycosylation sites follow: N540, N645, N649, N652, N662, N669, N673, N688, and N722. Residues 646-677 (NSHNTSNHSNMNIHTDNQTNNINNRSGNNSDN) are compositionally biased toward low complexity. The tract at residues 646–727 (NSHNTSNHSN…NSNNNLSFGS (82 aa)) is disordered. The segment covering 679 to 688 (DNEHDNDNDN) has biased composition (basic and acidic residues). Residues 718-727 (NSNNNLSFGS) are compositionally biased toward low complexity.

Belongs to the VID22 family. Glycosylated.

The protein localises to the cell membrane. It localises to the nucleus. Its function is as follows. Has a role in the negative regulation of gluconeogenesis. Imports fructose-1,6-bisphosphatase (FBPase) into the intermediate vacuole import and degradation (Vid) vesicles. This is an indirect role and requires cyclophilin A. The polypeptide is Vacuolar import and degradation protein 22 (VID22) (Saccharomyces cerevisiae (strain ATCC 204508 / S288c) (Baker's yeast)).